We begin with the raw amino-acid sequence, 434 residues long: Ribosomal protein uS12 methylthiotransferase RimO (434 aa).

The MTTase N-terminal domain maps to 1-107 (MHLGCEKNLV…ILNVLQRIEQ (107 aa)). Residues Cys5, Cys41, Cys70, Cys145, Cys149, and Cys152 each coordinate [4Fe-4S] cluster. In terms of domain architecture, Radical SAM core spans 131 to 360 (TTGKAVAYLK…ISIQQPIAEL (230 aa)). A TRAM domain is found at 363–434 (QNWIGRTVDV…DLYDLTGQVV (72 aa)).

This sequence belongs to the methylthiotransferase family. RimO subfamily. [4Fe-4S] cluster serves as cofactor.

The protein localises to the cytoplasm. It carries out the reaction L-aspartate(89)-[ribosomal protein uS12]-hydrogen + (sulfur carrier)-SH + AH2 + 2 S-adenosyl-L-methionine = 3-methylsulfanyl-L-aspartate(89)-[ribosomal protein uS12]-hydrogen + (sulfur carrier)-H + 5'-deoxyadenosine + L-methionine + A + S-adenosyl-L-homocysteine + 2 H(+). In terms of biological role, catalyzes the methylthiolation of an aspartic acid residue of ribosomal protein uS12. The polypeptide is Ribosomal protein uS12 methylthiotransferase RimO (Prochlorococcus marinus (strain SARG / CCMP1375 / SS120)).